Here is a 72-residue protein sequence, read N- to C-terminus: Putative membrane protein insertion efficiency factor (72 aa).

Belongs to the UPF0161 family.

Its subcellular location is the cell inner membrane. In terms of biological role, could be involved in insertion of integral membrane proteins into the membrane. This Myxococcus xanthus (strain DK1622) protein is Putative membrane protein insertion efficiency factor.